A 286-amino-acid chain; its full sequence is Tryptophan 2,3-dioxygenase (286 aa).

Substrate is bound by residues Phe-55–His-59, Tyr-117, and Arg-121. His-244 contributes to the heme binding site. Thr-258 contacts substrate.

It belongs to the tryptophan 2,3-dioxygenase family. As to quaternary structure, homotetramer. Heme serves as cofactor.

It catalyses the reaction L-tryptophan + O2 = N-formyl-L-kynurenine. Its pathway is amino-acid degradation; L-tryptophan degradation via kynurenine pathway; L-kynurenine from L-tryptophan: step 1/2. Heme-dependent dioxygenase that catalyzes the oxidative cleavage of the L-tryptophan (L-Trp) pyrrole ring and converts L-tryptophan to N-formyl-L-kynurenine. Catalyzes the oxidative cleavage of the indole moiety. The protein is Tryptophan 2,3-dioxygenase of Shewanella woodyi (strain ATCC 51908 / MS32).